Here is a 451-residue protein sequence, read N- to C-terminus: Glycylpeptide N-tetradecanoyltransferase (451 aa).

Tetradecanoyl-CoA contacts are provided by residues 34-37 (YKFW), 167-169 (LCV), and 175-179 (SKRLT). The active-site Proton acceptor; via carboxylate is the Leu-451.

Belongs to the NMT family. Monomer.

It is found in the cytoplasm. The catalysed reaction is N-terminal glycyl-[protein] + tetradecanoyl-CoA = N-tetradecanoylglycyl-[protein] + CoA + H(+). Its function is as follows. Adds a myristoyl group to the N-terminal glycine residue of certain cellular proteins. The sequence is that of Glycylpeptide N-tetradecanoyltransferase (NMT1) from Candida glabrata (strain ATCC 2001 / BCRC 20586 / JCM 3761 / NBRC 0622 / NRRL Y-65 / CBS 138) (Yeast).